The chain runs to 1251 residues: Phospholipid-transporting ATPase IC (1251 aa).

A disordered region spans residues 1-54 (MSTERDSETTFDEDSQPNDEVVPYSDDETEDELDDQGSAVEPEQNRVNREAEEN). Residues 1–108 (MSTERDSETT…TYKYNAFTFI (108 aa)) lie on the Cytoplasmic side of the membrane. The segment covering 25 to 35 (SDDETEDELDD) has biased composition (acidic residues). A compositionally biased stretch (basic and acidic residues) spans 43-54 (EQNRVNREAEEN). Residues 109–130 (PMNLFEQFKRAANLYFLALLIL) form a helical membrane-spanning segment. At 131–136 (QAVPQI) the chain is on the exoplasmic loop side. A helical transmembrane segment spans residues 137-156 (STLAWYTTLVPLLVVLGVTA). Over 157 to 340 (IKDLVDDVAR…TKIDYLMNYM (184 aa)) the chain is Cytoplasmic. Residues 341 to 362 (VYTIFVVLILLSAGLAIGHAYW) traverse the membrane as a helical segment. Over 363 to 389 (EAQVGNSSWYLYDGEDDTPSYRGFLIF) the chain is Exoplasmic loop. Residues 390-411 (WGYIIVLNTMVPISLYVSVEVI) form a helical membrane-spanning segment. The Cytoplasmic portion of the chain corresponds to 412–949 (RLGQSHFINW…GRWSYIRMCK (538 aa)). The active-site 4-aspartylphosphate intermediate is aspartate 454. Positions 454, 455, 456, 555, 596, 619, 652, 732, 733, 734, 867, and 873 each coordinate ATP. Position 454 (aspartate 454) interacts with Mg(2+). Threonine 456 serves as a coordination point for Mg(2+). Aspartate 893 lines the Mg(2+) pocket. Positions 896 and 897 each coordinate ATP. Aspartate 897 is a Mg(2+) binding site. The chain crosses the membrane as a helical span at residues 950 to 970 (FLRYFFYKNFAFTLVHFWYSF). The Exoplasmic loop portion of the chain corresponds to 971 to 982 (FNGYSAQTAYED). Residues 983-1002 (WFITLYNVLYTSLPVLLMGL) traverse the membrane as a helical segment. At 1003 to 1032 (LDQDVSDKLSLRFPGLYIVGQRDLLFNYKR) the chain is on the cytoplasmic side. Residues 1033-1054 (FFVSLLHGVLTSMILFFIPLGA) form a helical membrane-spanning segment. At 1055-1068 (YLQTVGQDGEAPSD) the chain is on the exoplasmic loop side. A helical transmembrane segment spans residues 1069 to 1091 (YQSFAVTIASALVITVNFQIGLD). The Cytoplasmic portion of the chain corresponds to 1092–1097 (TSYWTF). Residues 1098–1118 (VNAFSIFGSIALYFGIMFDFH) traverse the membrane as a helical segment. At 1119 to 1138 (SAGIHVLFPSAFQFTGTASN) the chain is on the exoplasmic loop side. A helical transmembrane segment spans residues 1139-1163 (ALRQPYIWLTIILAVAVCLLPVVAI). The Cytoplasmic segment spans residues 1164–1251 (RFLSMTIWPS…TAEYRRTGDS (88 aa)). Residue serine 1223 is modified to Phosphoserine.

The protein belongs to the cation transport ATPase (P-type) (TC 3.A.3) family. Type IV subfamily. In terms of assembly, component of a P4-ATPase flippase complex which consists of a catalytic alpha subunit ATP8B1 and an accessory beta subunit TMEM30A. The flippase ATP8B1:TMEM30A complex can form an intermediate phosphoenzyme in vitro. Also interacts with beta subunit TMEM30B. Requires Mg(2+) as cofactor. As to expression, found in most tissues except brain and skeletal muscle. Most abundant in pancreas and small intestine.

The protein localises to the cell membrane. It is found in the apical cell membrane. It localises to the cell projection. The protein resides in the stereocilium. Its subcellular location is the endoplasmic reticulum. The protein localises to the golgi apparatus. The enzyme catalyses ATP + H2O + phospholipidSide 1 = ADP + phosphate + phospholipidSide 2.. It catalyses the reaction a 1,2-diacyl-sn-glycero-3-phosphocholine(out) + ATP + H2O = a 1,2-diacyl-sn-glycero-3-phosphocholine(in) + ADP + phosphate + H(+). The catalysed reaction is a 1,2-diacyl-sn-glycero-3-phospho-L-serine(out) + ATP + H2O = a 1,2-diacyl-sn-glycero-3-phospho-L-serine(in) + ADP + phosphate + H(+). Its function is as follows. Catalytic component of a P4-ATPase flippase complex which catalyzes the hydrolysis of ATP coupled to the transport of phospholipids, in particular phosphatidylcholines (PC), from the outer to the inner leaflet of the plasma membrane. May participate in the establishment of the canalicular membrane integrity by ensuring asymmetric distribution of phospholipids in the canicular membrane. Thus may have a role in the regulation of bile acids transport into the canaliculus, uptake of bile acids from intestinal contents into intestinal mucosa or both and protect hepatocytes from bile salts. Involved in the microvillus formation in polarized epithelial cells; the function seems to be independent from its flippase activity. Participates in correct apical membrane localization of CDC42, CFTR and SLC10A2. Enables CDC42 clustering at the apical membrane during enterocyte polarization through the interaction between CDC42 polybasic region and negatively charged membrane lipids provided by ATP8B1. Together with TMEM30A is involved in uptake of the synthetic drug alkylphospholipid perifosine. Required for the preservation of cochlear hair cells in the inner ear. May act as cardiolipin transporter during inflammatory injury. The protein is Phospholipid-transporting ATPase IC of Homo sapiens (Human).